A 231-amino-acid chain; its full sequence is MAKNKRLTAAQATVDRNKAYGLDEAIALVKQVATAKFDETIEISLNLGIDPRHADQMVRGLLSLPNGTGKTLRVGVFARGAKAEEALAAGADVVGAEDLAEKVQAGEIAFDRCIATPDMMALVGRLGKILGPRGLMPNPKLGTVTMDVKGAVTAAKSGQVEYRAEKAGIIHAGIGKASFEGDKLAENIRAFVDAVQKAKPTGAKGTYLRKAALSSTMGPGIRVDVSAFSAG.

It belongs to the universal ribosomal protein uL1 family. Part of the 50S ribosomal subunit.

Its function is as follows. Binds directly to 23S rRNA. The L1 stalk is quite mobile in the ribosome, and is involved in E site tRNA release. Functionally, protein L1 is also a translational repressor protein, it controls the translation of the L11 operon by binding to its mRNA. The chain is Large ribosomal subunit protein uL1 from Gluconacetobacter diazotrophicus (strain ATCC 49037 / DSM 5601 / CCUG 37298 / CIP 103539 / LMG 7603 / PAl5).